The primary structure comprises 396 residues: MAETSVRNFNINFGPQHPAAHGVLRLVLELDGEVVDRVDPHIGLLHRGTEKLIEAKTYLQAVPYLDRLDYCAPMNQEHAFALAAERLLGIEVPKRGQLIRVLYCEIGRIMSHILNVTTQAMDVGALTPPLWGFVEREKLMVFYERASGSRMHAAYFRPGGVHQDLPRQLVEDIGKWIDPFLKSIDDLDRLLTGNRIFKQRNVDIGIVSLADAWAWGFSGVMVRGSGAAWDLRKSQPYECYSEMDFDIPIGKNGDCYDRYLVRMEEMRQSARIMRQCVDLLLGKESTGPVSNLDGKVVPPKRAAMKRSMEALIHHFKLYTEGYRVPAGEVYAAVEAPKGEFGVYLVSDGTNKPYRCKLRAPGFAHLQAMDFLCRGHLLADVTAVLGSLDIVFGEVDR.

Belongs to the complex I 49 kDa subunit family. In terms of assembly, NDH-1 is composed of 14 different subunits. Subunits NuoB, C, D, E, F, and G constitute the peripheral sector of the complex.

The protein resides in the cell inner membrane. The catalysed reaction is a quinone + NADH + 5 H(+)(in) = a quinol + NAD(+) + 4 H(+)(out). NDH-1 shuttles electrons from NADH, via FMN and iron-sulfur (Fe-S) centers, to quinones in the respiratory chain. The immediate electron acceptor for the enzyme in this species is believed to be ubiquinone. Couples the redox reaction to proton translocation (for every two electrons transferred, four hydrogen ions are translocated across the cytoplasmic membrane), and thus conserves the redox energy in a proton gradient. This chain is NADH-quinone oxidoreductase subunit D, found in Mesorhizobium japonicum (strain LMG 29417 / CECT 9101 / MAFF 303099) (Mesorhizobium loti (strain MAFF 303099)).